A 216-amino-acid chain; its full sequence is MKFFVDTANINEIKEANELGILDGVTTNPSLVAKEGVDFHERIAEIAKLVPGSVSAEVISLDAEGMIEEGKTLAAISENITVKVPMTVDGLKAVKAFAELGIKTNVTLIFSVPQALLAARAGATYVSPFLGRLDDIGHDGLQLISDIADIFSTHGLPTQIIAASVRHPVHVSEAAKRGAHIATIPLNVIKQLTGHPLTDKGIEKFLADWNKENVEK.

Lys83 serves as the catalytic Schiff-base intermediate with substrate.

This sequence belongs to the transaldolase family. Type 3B subfamily.

The protein localises to the cytoplasm. The enzyme catalyses D-sedoheptulose 7-phosphate + D-glyceraldehyde 3-phosphate = D-erythrose 4-phosphate + beta-D-fructose 6-phosphate. It functions in the pathway carbohydrate degradation; pentose phosphate pathway; D-glyceraldehyde 3-phosphate and beta-D-fructose 6-phosphate from D-ribose 5-phosphate and D-xylulose 5-phosphate (non-oxidative stage): step 2/3. Its function is as follows. Transaldolase is important for the balance of metabolites in the pentose-phosphate pathway. The chain is Probable transaldolase from Shouchella clausii (strain KSM-K16) (Alkalihalobacillus clausii).